A 1178-amino-acid polypeptide reads, in one-letter code: Leucine--tRNA ligase, cytoplasmic (1178 aa).

2 residues coordinate L-leucine: Tyr54 and Tyr56. Positions 62–65 (HLGH) match the 'HIGH' region motif. Phosphoserine is present on Ser169. The interval 262 to 511 (GPQEYTLVKL…DAGDALIYME (250 aa)) is editing domain. 2 residues coordinate L-leucine: Leu596 and Ser599. The 'KMSKS' region motif lies at 718–722 (KMSKS). Lys721 lines the ATP pocket. Position 722 is a phosphoserine (Ser722). An N6-acetyllysine mark is found at Lys972 and Lys1049.

The protein belongs to the class-I aminoacyl-tRNA synthetase family.

It is found in the cytoplasm. The enzyme catalyses tRNA(Leu) + L-leucine + ATP = L-leucyl-tRNA(Leu) + AMP + diphosphate. It carries out the reaction L-methionyl-tRNA(Leu) + H2O = tRNA(Leu) + L-methionine + H(+). With respect to regulation, 5-fluoro-1,3-dihydro-1-hydroxy-1,2-benzoxaborole inhibits LARS1 by forming a covalent adduct with the 3' adenosine of tRNA(Leu) at the editing site, thus locking the enzyme in an inactive conformation. Aminoacyl-tRNA synthetase that catalyzes the specific attachment of leucine to its cognate tRNA (tRNA(Leu)). It performs tRNA aminoacylation in a two-step reaction: Leu is initially activated by ATP to form a leucyl-adenylate (Leu-AMP) intermediate; then the leucyl moiety is transferred to the acceptor 3' end of the tRNA to yield leucyl-tRNA. To improve the fidelity of catalytic reactions, it is also able to hydrolyze misactivated aminoacyl-adenylate intermediates (pre-transfer editing) and mischarged aminoacyl-tRNAs (post-transfer editing). The polypeptide is Leucine--tRNA ligase, cytoplasmic (Lars1) (Mus musculus (Mouse)).